Consider the following 204-residue polypeptide: Probable 5-formyltetrahydrofolate cyclo-ligase (204 aa).

5 to 9 provides a ligand contact to ATP; it reads KNQLR. Residues Glu57, Trp102, and 140–144 each bind substrate; that span reads HGKGY. ATP is bound by residues 139-146 and Asp188; that span reads GHGKGYYD.

It belongs to the 5-formyltetrahydrofolate cyclo-ligase family.

The catalysed reaction is (6S)-5-formyl-5,6,7,8-tetrahydrofolate + ATP = (6R)-5,10-methenyltetrahydrofolate + ADP + phosphate. This is Probable 5-formyltetrahydrofolate cyclo-ligase from Schizosaccharomyces pombe (strain 972 / ATCC 24843) (Fission yeast).